The following is a 389-amino-acid chain: GDSL esterase/lipase At1g28570 (389 aa).

An N-terminal signal peptide occupies residues 1 to 25 (MATLFMKLVSFFLILSTFCLTTVNS). The Nucleophile role is filled by serine 41. N-linked (GlcNAc...) asparagine glycosylation is found at asparagine 137 and asparagine 319. Catalysis depends on residues aspartate 344 and histidine 347.

Belongs to the 'GDSL' lipolytic enzyme family.

It is found in the secreted. This chain is GDSL esterase/lipase At1g28570, found in Arabidopsis thaliana (Mouse-ear cress).